A 460-amino-acid polypeptide reads, in one-letter code: Protein btn1 (460 aa).

The next 11 membrane-spanning stretches (helical) occupy residues 42–62, 76–96, 105–125, 135–155, 164–184, 195–215, 287–307, 323–343, 356–376, 378–398, and 428–448; these read VCVAFWLFGLINNVLYVVILS, VVLLADVIPSFATKLIAPYFI, IIIFVFLSAAGMLLVALSPPY, LAGIVLASLSSGGGELSFVGL, LAAWGSGTGAAGLVGAGAYAL, ATLLASSCLPAVMVVSFFMVL, GLFFPFMLPLLLVYVAEYTIN, FAHFRAFYPAYNAIYQVGVFI, LYLPSFLQILNLVLLTLQAVF, FIPSVYIIFIIIFWEGLLGGL, and AAGICIAGFVSMVFEVWLCDW.

This sequence belongs to the battenin family.

It localises to the vacuole membrane. Its function is as follows. Involved in vacuolar transport and vacuole pH homeostasis. Also required for cytokinesis. In Aspergillus fumigatus (strain ATCC MYA-4609 / CBS 101355 / FGSC A1100 / Af293) (Neosartorya fumigata), this protein is Protein btn1 (btn1).